The primary structure comprises 106 residues: uncharacterized protein (106 aa).

The chain crosses the membrane as a helical span at residues 9–27 (ALAALAFTLGLIGLAAWAL). The interval 84 to 106 (TPKGPPPASALSPSPVAEPEPVV) is disordered.

It belongs to the FliO/MopB family.

It localises to the cell membrane. The protein resides in the bacterial flagellum basal body. This is an uncharacterized protein from Caulobacter vibrioides (strain ATCC 19089 / CIP 103742 / CB 15) (Caulobacter crescentus).